The sequence spans 549 residues: Hydroxylamine reductase (549 aa).

[4Fe-4S] cluster-binding residues include cysteine 5, cysteine 8, cysteine 17, and cysteine 23. Residues histidine 243, glutamate 267, cysteine 311, cysteine 403, cysteine 431, cysteine 456, glutamate 491, and lysine 493 each contribute to the hybrid [4Fe-2O-2S] cluster site. Cysteine 403 bears the Cysteine persulfide mark.

Belongs to the HCP family. [4Fe-4S] cluster serves as cofactor. Hybrid [4Fe-2O-2S] cluster is required as a cofactor.

It is found in the cytoplasm. It carries out the reaction A + NH4(+) + H2O = hydroxylamine + AH2 + H(+). Its function is as follows. Catalyzes the reduction of hydroxylamine to form NH(3) and H(2)O. This is Hydroxylamine reductase from Desulfitobacterium hafniense (strain Y51).